The sequence spans 304 residues: HTH-type transcriptional activator CmpR (304 aa).

The region spanning 1-61 (MKNATLHQFE…EQIGRKIYLT (61 aa)) is the HTH lysR-type domain. A DNA-binding region (H-T-H motif) is located at residues 21–40 (FTKAAEELFLTQPTVSQQMK).

The protein belongs to the LysR transcriptional regulatory family.

It is found in the cytoplasm. Its function is as follows. Activates transcription of the cmpABCD operon under carbon dioxide-limited conditions. Specifically binds to the cmpR-cmpA intergenic region. The sequence is that of HTH-type transcriptional activator CmpR (cmpR) from Synechocystis sp. (strain ATCC 27184 / PCC 6803 / Kazusa).